Consider the following 723-residue polypeptide: Catalase-peroxidase (723 aa).

The tryptophyl-tyrosyl-methioninium (Trp-Tyr) (with M-252) cross-link spans 98–226; the sequence is WHSAGSYRVG…LAAVMMGLIY (129 aa). Histidine 99 acts as the Proton acceptor in catalysis. The segment at residues 226–252 is a cross-link (tryptophyl-tyrosyl-methioninium (Tyr-Met) (with W-98)); the sequence is YVNPEGVDGNPDPLKTAKDMRVTFARM. Histidine 267 is a binding site for heme b.

It belongs to the peroxidase family. Peroxidase/catalase subfamily. As to quaternary structure, homodimer or homotetramer. The cofactor is heme b. Post-translationally, formation of the three residue Trp-Tyr-Met cross-link is important for the catalase, but not the peroxidase activity of the enzyme.

It carries out the reaction H2O2 + AH2 = A + 2 H2O. The catalysed reaction is 2 H2O2 = O2 + 2 H2O. Bifunctional enzyme with both catalase and broad-spectrum peroxidase activity. The protein is Catalase-peroxidase of Vibrio vulnificus (strain CMCP6).